Here is a 120-residue protein sequence, read N- to C-terminus: NAD(P)H-quinone oxidoreductase subunit 3 (120 aa).

The next 3 membrane-spanning stretches (helical) occupy residues 10 to 30, 64 to 84, and 89 to 109; these read LLVF…ASAL, MFAL…PWAV, and LGLL…VGLV.

This sequence belongs to the complex I subunit 3 family. In terms of assembly, NDH-1 can be composed of about 15 different subunits; different subcomplexes with different compositions have been identified which probably have different functions.

The protein resides in the cellular thylakoid membrane. The catalysed reaction is a plastoquinone + NADH + (n+1) H(+)(in) = a plastoquinol + NAD(+) + n H(+)(out). It catalyses the reaction a plastoquinone + NADPH + (n+1) H(+)(in) = a plastoquinol + NADP(+) + n H(+)(out). NDH-1 shuttles electrons from an unknown electron donor, via FMN and iron-sulfur (Fe-S) centers, to quinones in the respiratory and/or the photosynthetic chain. The immediate electron acceptor for the enzyme in this species is believed to be plastoquinone. Couples the redox reaction to proton translocation, and thus conserves the redox energy in a proton gradient. Cyanobacterial NDH-1 also plays a role in inorganic carbon-concentration. The sequence is that of NAD(P)H-quinone oxidoreductase subunit 3 from Synechococcus sp. (strain JA-2-3B'a(2-13)) (Cyanobacteria bacterium Yellowstone B-Prime).